A 309-amino-acid polypeptide reads, in one-letter code: Partitioning defective protein 6 (309 aa).

One can recognise a PB1 domain in the interval 14–96; it reads TLQVKSKFDS…PLLRLLIQRR (83 aa). The region spanning 132–149 is the Pseudo-CRIB domain; the sequence is ISNPEDFRQVSAIIDVDI. Residues 156–249 form the PDZ domain; the sequence is RVRLCKHGQE…NLIITVKPAN (94 aa). Polar residues predominate over residues 249 to 270; it reads NQRNTLSRGPSQQGTPNASEMS. Residues 249–309 are disordered; it reads NQRNTLSRGP…DANDSDSGED (61 aa).

Belongs to the PAR6 family. Interacts with par-3, required for its peripheral localization, and with cdc-42, required for the activation of a par-3/par-6/pkc-3 complex. As to expression, colocalized with par-3 at all stages in early embryos, at the anterior cortex of the embryo. Patchy expression observed at the periphery after completion of meiosis I and in meiosis II, which on completion of metaphase II, is restricted to the anterior 85% of embryo length; this decreases to 55% in embryos between prophase and telophase of the first mitosis. During the first cleavage, expression is detected in the advancing furrow. Along with pkc-3, is unable to associate with the apical cortex of cells that lack par-3. Transiently coexpressed and colocalized with par-3 and pkc-3, asymmetrically in the developing somatic gonad, including the spermathecal precursor cells of L4 larvae.

The protein resides in the cytoplasm. Its subcellular location is the cell membrane. It localises to the cell junction. It is found in the tight junction. Functionally, necessary for apicobasal and anterior-posterior asymmetries associated with cell adhesion and gastrulation during the first few cell cycles of embryogenesis. Required for localizing/ maintaining par-3 at the cell periphery. Regulates mes-1 expression and/or localization pattern during early embryogenesis. Acts together with par-3 and pkc-3 in maintaining epithelial cell polarity in the distal spermatheca. Plays a role in endosome and Golgi body positioning. This chain is Partitioning defective protein 6, found in Caenorhabditis elegans.